We begin with the raw amino-acid sequence, 329 residues long: Tryptophan--tRNA ligase (329 aa).

ATP is bound by residues 9–11 (QPS) and 17–18 (GN). The 'HIGH' region motif lies at 10 to 18 (PSGIPTIGN). Asp133 is a binding site for L-tryptophan. Residues 145–147 (GDD), Val184, and 193–197 (KMSKS) each bind ATP. Positions 193–197 (KMSKS) match the 'KMSKS' region motif.

This sequence belongs to the class-I aminoacyl-tRNA synthetase family. As to quaternary structure, homodimer.

The protein localises to the cytoplasm. The catalysed reaction is tRNA(Trp) + L-tryptophan + ATP = L-tryptophyl-tRNA(Trp) + AMP + diphosphate + H(+). Its function is as follows. Catalyzes the attachment of tryptophan to tRNA(Trp). The protein is Tryptophan--tRNA ligase of Staphylococcus epidermidis (strain ATCC 35984 / DSM 28319 / BCRC 17069 / CCUG 31568 / BM 3577 / RP62A).